Here is a 266-residue protein sequence, read N- to C-terminus: Interleukin-1 beta (266 aa).

A propeptide spanning residues 1–113 is cleaved from the precursor; that stretch reads MATVPEPINE…ETSSDELLCD (113 aa).

This sequence belongs to the IL-1 family. In terms of assembly, monomer. In its precursor form, weakly interacts with full-length MEFV; the mature cytokine does not interact at all. Interacts with integrins ITGAV:ITGBV and ITGA5:ITGB1; integrin-binding is required for IL1B signaling. Interacts with cargo receptor TMED10; the interaction is direct and is required for the secretion of IL1B mature form. Interacts with HSP90AB1; the interaction facilitates cargo translocation into the ERGIC. Interacts with HSP90B1; the interaction facilitates cargo translocation into the ERGIC.

It is found in the cytoplasm. Its subcellular location is the cytosol. The protein localises to the secreted. The protein resides in the lysosome. It localises to the extracellular exosome. Functionally, potent pro-inflammatory cytokine. Initially discovered as the major endogenous pyrogen, induces prostaglandin synthesis, neutrophil influx and activation, T-cell activation and cytokine production, B-cell activation and antibody production, and fibroblast proliferation and collagen production. Promotes Th17 differentiation of T-cells. Synergizes with IL12/interleukin-12 to induce IFNG synthesis from T-helper 1 (Th1) cells. Plays a role in angiogenesis by inducing VEGF production synergistically with TNF and IL6. Involved in transduction of inflammation downstream of pyroptosis: its mature form is specifically released in the extracellular milieu by passing through the gasdermin-D (GSDMD) pore. This is Interleukin-1 beta (IL1B) from Ovis aries (Sheep).